We begin with the raw amino-acid sequence, 270 residues long: Large ribosomal subunit protein uL10 (270 aa).

A disordered region spans residues 234 to 270 (VTELEAGKTRPKREGNRRQAMNGDEMDEDQSSDEDSD). Residues 238–250 (EAGKTRPKREGNR) are compositionally biased toward basic and acidic residues. The span at 257 to 270 (DEMDEDQSSDEDSD) shows a compositional bias: acidic residues.

The protein belongs to the universal ribosomal protein uL10 family. As to quaternary structure, associates with the pre-60S ribosomal particle.

The protein localises to the nucleus. Its subcellular location is the nucleolus. The protein resides in the cytoplasm. In terms of biological role, component of the ribosome assembly machinery. Nuclear paralog of the ribosomal protein P0, it binds pre-60S subunits at an early stage of assembly in the nucleolus, and is replaced by P0 in cytoplasmic pre-60S subunits and mature 80S ribosomes. This is Large ribosomal subunit protein uL10 from Chaetomium thermophilum (strain DSM 1495 / CBS 144.50 / IMI 039719) (Thermochaetoides thermophila).